The primary structure comprises 478 residues: MKIELVFIPLPGIGHLRPTVKLAKQLIGSENRLSITIIIIPSRFDAGDASACIASLTTLSQDDRLHYESISVAKQPPTSDPDPVPAQVYIEKQKTKVRDAVAARIVDPTRKLAGFVVDMFCSSMIDVANEFGVPCYMVYTSNATFLGTMLHVQQMYDQKKYDVSELENSVTELEFPSLTRPYPVKCLPHILTSKEWLPLSLAQARCFRKMKGILVNTVAELEPHALKMFNINGDDLPQVYPVGPVLHLENGNDDDEKQSEILRWLDEQPSKSVVFLCFGSLGGFTEEQTRETAVALDRSGQRFLWCLRHASPNIKTDRPRDYTNLEEVLPEGFLERTLDRGKVIGWAPQVAVLEKPAIGGFVTHCGWNSILESLWFGVPMVTWPLYAEQKVNAFEMVEELGLAVEIRKYLKGDLFAGEMETVTAEDIERAIRRVMEQDSDVRNNVKEMAEKCHFALMDGGSSKAALEKFIQDVIENMD.

UDP-alpha-D-glucose contacts are provided by residues Ser-280, 347-349 (APQ), 364-372 (HCGWNSILE), and 386-389 (YAEQ).

The protein belongs to the UDP-glycosyltransferase family.

Possesses low quercetin 3-O-glucosyltransferase activity in vitro. This is UDP-glycosyltransferase 71B5 (UGT71B5) from Arabidopsis thaliana (Mouse-ear cress).